The primary structure comprises 460 residues: MEFSEWYSDILEKAGIYDLRYPIKGCGVYLPYGFKIRRYSFEILRKLLDETNHDETLFPMLIPENLLAKEGEHIKGFEDEVFWVTHGGKTPLEVKLALRPTSETTMYYMMKQWIKVHTDLPMKLYQVVNTFRYETKHTRPLIRLREIMSFKEAHTAHATKEDCDAQITEALNLYGEFFDEICVPYIISKRPEWDKFPGADYTMAFDTIYPDGKTMQIGTVHNLGQNFAKTFELEFETPDGEKDFVYQTCYGISDRAIASLISVHGDEKGLVIPVDVAPIQIVLIPLLFKGKEEIVMDKIKELNNTLKSEFRVHLDDRDIRPGRKYNDWEIKGVPLRIELGPRDIENGQALIVRRDTGEKITVEYSNILEEVEKIVSMYKENLKIKADEKIKNFLTVVNFESDVNALSEKVKAALLENKGIILIPFDESVYNEEFEELIDASVLGQTAYEGKDYISVARTY.

It belongs to the class-II aminoacyl-tRNA synthetase family. ProS type 3 subfamily. Homodimer.

The protein localises to the cytoplasm. The catalysed reaction is tRNA(Pro) + L-proline + ATP = L-prolyl-tRNA(Pro) + AMP + diphosphate. Functionally, catalyzes the attachment of proline to tRNA(Pro) in a two-step reaction: proline is first activated by ATP to form Pro-AMP and then transferred to the acceptor end of tRNA(Pro). In Methanococcus maripaludis (strain C5 / ATCC BAA-1333), this protein is Proline--tRNA ligase.